Consider the following 76-residue polypeptide: Putative defensin-like protein 184 (76 aa).

A signal peptide spans M1–G21. Intrachain disulfides connect C32-C76, C38-C58, C44-C70, and C48-C72.

It belongs to the DEFL family.

The protein localises to the secreted. The chain is Putative defensin-like protein 184 (LCR18) from Arabidopsis thaliana (Mouse-ear cress).